The sequence spans 275 residues: Two-component response regulator PprB (275 aa).

The Response regulatory domain maps to 10 to 128 (SVLIIDDEPQ…ELLHGLERLE (119 aa)). Aspartate 60 bears the 4-aspartylphosphate mark. The interval 173–205 (SQPSALRSEDSQPSAPPAPVAESQVSPSNPLFG) is disordered. Residues 200-265 (SNPLFGKLSP…QLALALSPAA (66 aa)) form the HTH luxR-type domain. The segment at residues 224 to 243 (NYQIAYELGITENTVKLYVS) is a DNA-binding region (H-T-H motif).

In terms of processing, phosphorylated by PprA.

Functionally, member of the two-component regulatory system PprA/PprB involved in biofilm formation by controlling the expression of many related genes including type IVb pili major subunit flp pilin, adhesin bapA or cupE fimbriae. Functions as a transcription regulator by direct binding to promoter regions. Negatively regulates its own transcription. The protein is Two-component response regulator PprB of Pseudomonas aeruginosa (strain ATCC 15692 / DSM 22644 / CIP 104116 / JCM 14847 / LMG 12228 / 1C / PRS 101 / PAO1).